Here is a 367-residue protein sequence, read N- to C-terminus: RYamide receptor (367 aa).

The Extracellular portion of the chain corresponds to 1-35 (MDANTTRNESFSLDCELVNPNSTLANVYFLSAVYS). Residues asparagine 4, asparagine 8, and asparagine 21 are each glycosylated (N-linked (GlcNAc...) asparagine). Residues 36-56 (MYAIIFVVALIGNSFVCYIVL) form a helical membrane-spanning segment. The Cytoplasmic portion of the chain corresponds to 57 to 66 (SSPPMRTVTN). The chain crosses the membrane as a helical span at residues 67–87 (FFILNLAIGDVLITLLCVPFT). The Extracellular segment spans residues 88 to 113 (SVSLLMQYWPFGGILCPVVNYSQALS). An N-linked (GlcNAc...) asparagine glycan is attached at asparagine 107. The helical transmembrane segment at 114 to 134 (VFVSAYTLVAISIDKYMIIMW) threads the bilayer. Residues 135–143 (PLKPRISKR) lie on the Cytoplasmic side of the membrane. The helical transmembrane segment at 144 to 164 (FATYIIALVWLIAGITVLPSA) threads the bilayer. Topologically, residues 165-212 (TFTTLINDENILGTSAYEQCDKYICAEEYSKVGQEYGDLYTKVLMFLQ) are extracellular. A helical membrane pass occupies residues 213–233 (YVIPSLVLLFTYTSIGVVIWC). Residues 234–258 (HRIPGEAENSRDQRIAKNKTKMIKM) lie on the Cytoplasmic side of the membrane. The helical transmembrane segment at 259–279 (MVTVVCVYTICWLPYNVLMIF) threads the bilayer. Residues 280–282 (KEH) are Extracellular-facing. A helical transmembrane segment spans residues 283 to 303 (ISGSVMVYLYFPLHGLAMSHA). Topologically, residues 304–367 (CYNPIIYCYM…EITRAQPTSA (64 aa)) are cytoplasmic.

It belongs to the G-protein coupled receptor 1 family.

The protein localises to the cell membrane. Receptor for the neuropeptides RYamide-1 and RYamide-2. The activity of this receptor is mediated by G proteins which activate a phosphatidyl-inositol-calcium second messenger system. RYamide-2 is the most potent activator. The sequence is that of RYamide receptor from Tribolium castaneum (Red flour beetle).